We begin with the raw amino-acid sequence, 190 residues long: CASP-like protein 1U3 (190 aa).

Over 1–24 (MNGATVQPSYKEAGPVRYHPMHDC) the chain is Cytoplasmic. Residues 25 to 45 (LSLILRLLTLGATIAAIVAML) traverse the membrane as a helical segment. The Extracellular portion of the chain corresponds to 46-70 (KSTQTVPTLLGPHTARWKDFPAFEW). A helical membrane pass occupies residues 71–91 (FVIGNSIVLVYAALGTLAACL). Over 92 to 113 (SLFTRRGPLSYTKTAWLTFLCD) the chain is Cytoplasmic. Residues 114-134 (FICSCALISAGSTALGVAWIG) form a helical membrane-spanning segment. At 135-158 (KHGQHSAFWNAVCPTVDRFCDYVQ) the chain is on the extracellular side. Residues 159-179 (GALIATLCGFIFQALSTVIAA) form a helical membrane-spanning segment. At 180 to 190 (SALHNLATHRH) the chain is on the cytoplasmic side.

The protein belongs to the Casparian strip membrane proteins (CASP) family. Homodimer and heterodimers.

It is found in the cell membrane. This chain is CASP-like protein 1U3, found in Physcomitrium patens (Spreading-leaved earth moss).